Consider the following 327-residue polypeptide: Gonadotropin-releasing hormone receptor (327 aa).

The Extracellular segment spans residues 1 to 38 (MANNASLEQDQNHCSAINNSIPLTQGKLPTLTLSGKIR). N-linked (GlcNAc...) asparagine glycans are attached at residues asparagine 4 and asparagine 18. A helical transmembrane segment spans residues 39–58 (VTVTFFLFLLSTAFNASFLV). The Cytoplasmic portion of the chain corresponds to 59–77 (KLQRWTQKRKKGKKLSRMK). The helical transmembrane segment at 78-97 (VLLKHLTLANLLETLIVMPL) threads the bilayer. At 98–115 (DGMWNITVQWYAGEFLCK) the chain is on the extracellular side. N-linked (GlcNAc...) asparagine glycosylation is present at asparagine 102. A disulfide bond links cysteine 114 and cysteine 195. Residues 116 to 137 (VLSYLKLFSMYAPAFMMVVISL) form a helical membrane-spanning segment. Residues 138 to 164 (DRSLAVTQPLAVQSKSKLERSMTSLAW) are Cytoplasmic-facing. The helical transmembrane segment at 165 to 184 (ILSIVFAGPQLYIFRMIYLA) threads the bilayer. Over 185–211 (DGSGPAVFSQCVTHCSFPQWWHEAFYN) the chain is Extracellular. A helical transmembrane segment spans residues 212–231 (FFTFSCLFIIPLLIMLICNA). Topologically, residues 232–280 (KIIFALTRVLHQDPRKLQLNQSKNNIPRARLRTLKMTVAFGTSFVICWT) are cytoplasmic. Residues 281–299 (PYYVLGIWYWFDPEMLNRV) traverse the membrane as a helical segment. At 300-305 (SEPVNH) the chain is on the extracellular side. A helical membrane pass occupies residues 306 to 325 (FFFLFAFLNPCFDPLIYGYF). Residues 326 to 327 (SL) are Cytoplasmic-facing.

It belongs to the G-protein coupled receptor 1 family.

Its subcellular location is the cell membrane. Its function is as follows. Receptor for gonadotropin releasing hormone (GnRH) that mediates the action of GnRH to stimulate the secretion of the gonadotropic hormones luteinizing hormone (LH) and follicle-stimulating hormone (FSH). This receptor mediates its action by association with G-proteins that activate a phosphatidylinositol-calcium second messenger system. This Rattus norvegicus (Rat) protein is Gonadotropin-releasing hormone receptor (Gnrhr).